The chain runs to 500 residues: Gamma-glutamylanilide synthase (500 aa).

The GS beta-grasp domain occupies 32–136 (LGLEMIRLSW…MLADLHWKSG (105 aa)). The region spanning 143-500 (PRGIMKKAVK…WEQKEYFNLL (358 aa)) is the GS catalytic domain.

The protein belongs to the glutamine synthetase family. Homohexamer.

The catalysed reaction is aniline + L-glutamate + ATP = N(5)-phenyl-L-glutamine + ADP + phosphate. Involved in the initial oxidation of aniline to catechol by the release of its amino group. Catalyzes the ATP-dependent ligation of L-glutamate to aniline to yield gamma-glutamylanilide (gamma-GA). AtdA1 has a broad substrate range and is able to convert the following anilines, including chlorinated and methylated forms of aniline: aniline (100%), o-chloroaniline (92%), m-chloroaniline (69%), p-chloroaniline (92%), o-methylaniline (40%), m-methylaniline (27%) and p-methylaniline (45%). The protein is Gamma-glutamylanilide synthase of Acinetobacter sp.